We begin with the raw amino-acid sequence, 187 residues long: UPF0301 protein YqgE (187 aa).

This sequence belongs to the UPF0301 (AlgH) family.

The sequence is that of UPF0301 protein YqgE from Escherichia coli O139:H28 (strain E24377A / ETEC).